A 276-amino-acid polypeptide reads, in one-letter code: Imidazole glycerol phosphate synthase subunit HisF (276 aa).

Residues aspartate 11 and aspartate 130 contribute to the active site.

This sequence belongs to the HisA/HisF family. In terms of assembly, heterodimer of HisH and HisF.

The protein localises to the cytoplasm. It catalyses the reaction 5-[(5-phospho-1-deoxy-D-ribulos-1-ylimino)methylamino]-1-(5-phospho-beta-D-ribosyl)imidazole-4-carboxamide + L-glutamine = D-erythro-1-(imidazol-4-yl)glycerol 3-phosphate + 5-amino-1-(5-phospho-beta-D-ribosyl)imidazole-4-carboxamide + L-glutamate + H(+). It participates in amino-acid biosynthesis; L-histidine biosynthesis; L-histidine from 5-phospho-alpha-D-ribose 1-diphosphate: step 5/9. Functionally, IGPS catalyzes the conversion of PRFAR and glutamine to IGP, AICAR and glutamate. The HisF subunit catalyzes the cyclization activity that produces IGP and AICAR from PRFAR using the ammonia provided by the HisH subunit. This chain is Imidazole glycerol phosphate synthase subunit HisF, found in Beijerinckia indica subsp. indica (strain ATCC 9039 / DSM 1715 / NCIMB 8712).